Reading from the N-terminus, the 620-residue chain is Glutathione-regulated potassium-efflux system protein KefC (620 aa).

12 helical membrane-spanning segments follow: residues 4–24, 26–46, 54–74, 90–110, 114–134, 149–169, 178–198, 218–238, 270–290, 294–314, 327–347, and 359–379; these read HTLI…PIAV, LGLG…PWGL, SILH…GLEL, GALQ…LLGL, VAEL…MQAM, FAVL…IPLL, MGAF…VVLL, VFSA…EEVG, GLLL…GTLI, LRIV…LWLI, WFAV…GAAQ, and SLTL…VILN. An RCK N-terminal domain is found at 399 to 518; sequence QPRVIIAGFG…AGVEKPERET (120 aa). Residues 597-620 form a disordered region; that stretch reads GWQGTEEGKHTGNMADEPETKPSS.

The protein belongs to the monovalent cation:proton antiporter 2 (CPA2) transporter (TC 2.A.37) family. KefC subfamily. In terms of assembly, homodimer. Interacts with the regulatory subunit KefF.

It is found in the cell inner membrane. Its function is as follows. Pore-forming subunit of a potassium efflux system that confers protection against electrophiles. Catalyzes K(+)/H(+) antiport. In Escherichia coli (strain SMS-3-5 / SECEC), this protein is Glutathione-regulated potassium-efflux system protein KefC.